Reading from the N-terminus, the 225-residue chain is Ribosome maturation factor RimM (225 aa).

A PRC barrel domain is found at 144-225 (ADEFYWVDLI…RIVVDWEADY (82 aa)).

Belongs to the RimM family. Binds ribosomal protein uS19.

The protein localises to the cytoplasm. In terms of biological role, an accessory protein needed during the final step in the assembly of 30S ribosomal subunit, possibly for assembly of the head region. Essential for efficient processing of 16S rRNA. May be needed both before and after RbfA during the maturation of 16S rRNA. It has affinity for free ribosomal 30S subunits but not for 70S ribosomes. This Burkholderia lata (strain ATCC 17760 / DSM 23089 / LMG 22485 / NCIMB 9086 / R18194 / 383) protein is Ribosome maturation factor RimM.